The chain runs to 80 residues: D-alanyl carrier protein 2 (80 aa).

The Carrier domain maps to 1–80 (MIMDDVKATV…KIVAKVASLQ (80 aa)). S38 is modified (O-(pantetheine 4'-phosphoryl)serine).

Belongs to the DltC family. Post-translationally, 4'-phosphopantetheine is transferred from CoA to a specific serine of apo-DCP.

Its subcellular location is the cytoplasm. It participates in cell wall biogenesis; lipoteichoic acid biosynthesis. Its function is as follows. Carrier protein involved in the D-alanylation of lipoteichoic acid (LTA). The loading of thioester-linked D-alanine onto DltC is catalyzed by D-alanine--D-alanyl carrier protein ligase DltA. The DltC-carried D-alanyl group is further transferred to cell membrane phosphatidylglycerol (PG) by forming an ester bond, probably catalyzed by DltD. D-alanylation of LTA plays an important role in modulating the properties of the cell wall in Gram-positive bacteria, influencing the net charge of the cell wall. The polypeptide is D-alanyl carrier protein 2 (Lactiplantibacillus plantarum (strain ATCC BAA-793 / NCIMB 8826 / WCFS1) (Lactobacillus plantarum)).